Here is a 161-residue protein sequence, read N- to C-terminus: Allophycocyanin alpha chain 1 (161 aa).

Residue Asn-71 is modified to N4-methylasparagine. Cys-81 contacts (2R,3E)-phycocyanobilin.

It belongs to the phycobiliprotein family. As to quaternary structure, component of the phycobilisome. Heterodimer of an alpha and a beta chain. In terms of processing, contains one covalently linked bilin chromophore.

It is found in the cellular thylakoid membrane. Its function is as follows. Light-harvesting photosynthetic bile pigment-protein from the phycobiliprotein complex. Allophycocyanin has a maximum absorption at approximately 650 nanometers. This Microchaete diplosiphon (Fremyella diplosiphon) protein is Allophycocyanin alpha chain 1.